Consider the following 962-residue polypeptide: Protocadherin gamma-A4 (962 aa).

The interval 1-24 (MHFILDPEDPGAPQASTEGKPKHR) is disordered. A signal peptide spans 1-59 (MHFILDPEDPGAPQASTEGKPKHRRLRGGVVMAAPPARPDHTRLLQICLLLGVLVEIRA). Cadherin domains are found at residues 60-164 (EQIL…PPSF), 165-273 (GTEQ…APVF), 274-378 (TQPE…APEV), 379-483 (TVTS…PPTF), 484-598 (PHAS…YPTF), and 601-713 (DGST…KPSA). The Extracellular portion of the chain corresponds to 60–723 (EQILYSVFEE…DPDDSGLTLY (664 aa)). Asn450 and Asn576 each carry an N-linked (GlcNAc...) asparagine glycan. Residues 724–744 (LVVAVAAVSCVFLAFVTVLLA) traverse the membrane as a helical segment. Topologically, residues 745-962 (LKLRRWHKSR…KKKSGKKEKK (218 aa)) are cytoplasmic. Disordered regions lie at residues 832 to 871 (KGDP…WPNN) and 932 to 962 (ATLT…KEKK). Residues 836-871 (NLQQAPPNTDWRFSQAQRPGTSGSQNGDDTGTWPNN) show a composition bias toward polar residues. A compositionally biased stretch (basic residues) spans 952-962 (NKKKSGKKEKK).

The protein resides in the cell membrane. Functionally, potential calcium-dependent cell-adhesion protein. May be involved in the establishment and maintenance of specific neuronal connections in the brain. The protein is Protocadherin gamma-A4 (PCDHGA4) of Homo sapiens (Human).